Reading from the N-terminus, the 131-residue chain is Single-stranded DNA-binding protein 2 (131 aa).

Residues 1 to 103 (MYNKVIMIGR…VLASSFQLLE (103 aa)) form the SSB domain. Positions 126–131 (EEELPF) match the Important for interaction with partner proteins motif.

Homotetramer.

In terms of biological role, plays an important role in DNA replication, recombination and repair. Binds to ssDNA and to an array of partner proteins to recruit them to their sites of action during DNA metabolism. The sequence is that of Single-stranded DNA-binding protein 2 (ssb2) from Streptococcus agalactiae serotype V (strain ATCC BAA-611 / 2603 V/R).